We begin with the raw amino-acid sequence, 477 residues long: PTS system MurNAc-GlcNAc-specific EIIBC component (477 aa).

The PTS EIIB type-1 domain occupies 5 to 87 (QQLAHHILDA…VKLSGVQLGE (83 aa)). Cys27 acts as the Phosphocysteine intermediate; for EIIB activity in catalysis. Residues 91–113 (HRSNTSNIKNQAQQNKREFQQKR) are disordered. The span at 92-104 (RSNTSNIKNQAQQ) shows a compositional bias: polar residues. The PTS EIIC type-1 domain occupies 123–477 (KSIANIFIPL…EMRNLNKLGD (355 aa)). Transmembrane regions (helical) follow at residues 128–148 (IFIPLIPAFIGAGLIGGIAAV), 167–187 (VAVLNVIKDGMLAYLAIFTGF), 192–212 (VFGATPGLGGVIGGTTLLTGI), 227–247 (LIAGQGGIIGVILAVWLLSII), 267–287 (ISLLIIGLLTIFFFMPIAGFI), 298–318 (VIGVGGIFSGFIIGAFFLPLV), 342–362 (LLPIAAMAGAGQVGAALALWV), 377–397 (ALPVGFLGIGEPLIYGVTLPL), 401–421 (FITACLGGGIGGAVIGGIGHI), and 443–463 (LGYIIGLLSAYLAGFIFTYFF).

Its subcellular location is the cell membrane. It catalyses the reaction N-acetyl-beta-D-muramate-(1-&gt;4)-N-acetyl-D-glucosamine(out) + N(pros)-phospho-L-histidyl-[protein] = 6-phospho-N-acetyl-beta-D-muramate-(1-&gt;4)-N-acetyl-D-glucosamine(in) + L-histidyl-[protein]. The protein operates within cell wall biogenesis; peptidoglycan recycling. In terms of biological role, the phosphoenolpyruvate-dependent sugar phosphotransferase system (sugar PTS), a major carbohydrate active transport system, catalyzes the phosphorylation of incoming sugar substrates concomitantly with their translocation across the cell membrane. This system is involved in the uptake and phosphorylation of MurNAc-GlcNAc, the principle peptidoglycan turnover product of S.aureus, yielding cytoplasmic MurNAc 6P-GlcNAc. In Staphylococcus haemolyticus (strain JCSC1435), this protein is PTS system MurNAc-GlcNAc-specific EIIBC component.